The sequence spans 843 residues: Axin-2 (843 aa).

A disordered region spans residues 1–75 (MSSAMLVTCL…EGRASPDSPL (75 aa)). The Tankyrase-binding motif signature appears at 21–30 (APRPPVPGEE). The segment covering 56–69 (RRNEDGLGEPEGRA) has biased composition (basic and acidic residues). The RGS domain occupies 81–200 (SLHSLLGDQD…LTSDIYLEYV (120 aa)). The tract at residues 327 to 413 (VGSKKQLQRE…REGSELTLNS (87 aa)) is interaction with GSK3B. Residues 334–393 (QREMHRSVKANGQVSLPHFPRTHRLPKEMTPVEPATFAAELISRLEKLKLELESRHSLEE) are interaction with SIAH1 and SIAH2. Disordered stretches follow at residues 396-435 (QQIR…EEDP), 447-494 (LKTP…AASP), 561-674 (APET…RTTP), and 718-748 (ASQQ…EDHK). Positions 413 to 476 (SREGAPTQHP…PDHHHHHHSQ (64 aa)) are interaction with beta-catenin. Composition is skewed to low complexity over residues 477–494 (YHSL…AASP) and 588–597 (PGLALPAREG). Over residues 727–741 (SATVQTGATPFSNPS) the composition is skewed to polar residues. One can recognise a DIX domain in the interval 761 to 843 (ASELVVTYFF…RILGKVERID (83 aa)).

In terms of assembly, interacts with glycogen synthase kinase-3 beta (GSK3B) and beta-catenin. The interaction between axin and beta-catenin occurs via the armadillo repeats contained in beta-catenin. Interacts with SMAD7 and RNF111. Interacts with ANKRD6. Interacts with SIAH1. Interacts with SIAH2. Probably phosphorylated by GSK3B and dephosphorylated by PP2A. In terms of processing, ADP-ribosylated by tankyrase TNKS and TNKS2. Poly-ADP-ribosylated protein is recognized by RNF146, followed by ubiquitination and subsequent activation of the Wnt signaling pathway. Post-translationally, ubiquitinated by RNF146 when poly-ADP-ribosylated, leading to its degradation and subsequent activation of the Wnt signaling pathway. Deubiquitinated by USP34, deubiquitinated downstream of beta-catenin stabilization step: deubiquitination is important Wnt signaling to positively regulate beta-catenin (CTNBB1)-mediated transcription. In terms of tissue distribution, expressed in brain and lymphoblast.

The protein localises to the cytoplasm. Functionally, inhibitor of the Wnt signaling pathway. Down-regulates beta-catenin. Probably facilitate the phosphorylation of beta-catenin and APC by GSK3B. This is Axin-2 (AXIN2) from Homo sapiens (Human).